A 159-amino-acid polypeptide reads, in one-letter code: Phosphopantetheine adenylyltransferase (159 aa).

Position 10 (T10) interacts with substrate. Residues 10-11 (TF) and H18 each bind ATP. K42, M74, and R88 together coordinate substrate. ATP-binding positions include 89 to 91 (GLR), E99, and 124 to 130 (WSFISSS).

It belongs to the bacterial CoaD family. Homohexamer. It depends on Mg(2+) as a cofactor.

It is found in the cytoplasm. The enzyme catalyses (R)-4'-phosphopantetheine + ATP + H(+) = 3'-dephospho-CoA + diphosphate. The protein operates within cofactor biosynthesis; coenzyme A biosynthesis; CoA from (R)-pantothenate: step 4/5. Functionally, reversibly transfers an adenylyl group from ATP to 4'-phosphopantetheine, yielding dephospho-CoA (dPCoA) and pyrophosphate. The chain is Phosphopantetheine adenylyltransferase from Salmonella paratyphi A (strain ATCC 9150 / SARB42).